We begin with the raw amino-acid sequence, 380 residues long: Cytochrome b (380 aa).

The next 4 helical transmembrane spans lie at 34 to 54 (FGSLLGICLLTQILTGLLLAT), 78 to 99 (WLIRNLHANGASFFFICIYLHI), 114 to 134 (WNTGIILLLTLMATAFVGYVL), and 179 to 199 (FFALHFLLPFMIAGLALIHLT). The heme b site is built by H84 and H98. The heme b site is built by H183 and H197. H202 is an a ubiquinone binding site. The next 4 helical transmembrane spans lie at 227–247 (LKDILGFIIMFLPLTTLALFS), 289–309 (LGGVLALAASVLVLFLVPLLH), 321–341 (LSQFLFWTLVANLLILTWVGS), and 348–368 (FIIIGQLASLTYFTILLLLFP).

It belongs to the cytochrome b family. The cytochrome bc1 complex contains 11 subunits: 3 respiratory subunits (MT-CYB, CYC1 and UQCRFS1), 2 core proteins (UQCRC1 and UQCRC2) and 6 low-molecular weight proteins (UQCRH/QCR6, UQCRB/QCR7, UQCRQ/QCR8, UQCR10/QCR9, UQCR11/QCR10 and a cleavage product of UQCRFS1). This cytochrome bc1 complex then forms a dimer. Requires heme b as cofactor.

It is found in the mitochondrion inner membrane. Functionally, component of the ubiquinol-cytochrome c reductase complex (complex III or cytochrome b-c1 complex) that is part of the mitochondrial respiratory chain. The b-c1 complex mediates electron transfer from ubiquinol to cytochrome c. Contributes to the generation of a proton gradient across the mitochondrial membrane that is then used for ATP synthesis. In Pinguinus impennis (Great auk), this protein is Cytochrome b (MT-CYB).